A 135-amino-acid polypeptide reads, in one-letter code: Small ribosomal subunit protein bS16 (135 aa).

Belongs to the bacterial ribosomal protein bS16 family.

The chain is Small ribosomal subunit protein bS16 from Prosthecochloris aestuarii (strain DSM 271 / SK 413).